The primary structure comprises 292 residues: Ribosomal protein L11 methyltransferase (292 aa).

S-adenosyl-L-methionine contacts are provided by Thr-144, Gly-165, Asp-187, and Asn-229.

The protein belongs to the methyltransferase superfamily. PrmA family.

Its subcellular location is the cytoplasm. The catalysed reaction is L-lysyl-[protein] + 3 S-adenosyl-L-methionine = N(6),N(6),N(6)-trimethyl-L-lysyl-[protein] + 3 S-adenosyl-L-homocysteine + 3 H(+). Its function is as follows. Methylates ribosomal protein L11. In Pseudomonas putida (strain ATCC 700007 / DSM 6899 / JCM 31910 / BCRC 17059 / LMG 24140 / F1), this protein is Ribosomal protein L11 methyltransferase.